The chain runs to 286 residues: 4-diphosphocytidyl-2-C-methyl-D-erythritol kinase (286 aa).

Lysine 13 is an active-site residue. Residue 101–111 participates in ATP binding; sequence PQGAGLGGGSS. Residue aspartate 143 is part of the active site.

The protein belongs to the GHMP kinase family. IspE subfamily.

The catalysed reaction is 4-CDP-2-C-methyl-D-erythritol + ATP = 4-CDP-2-C-methyl-D-erythritol 2-phosphate + ADP + H(+). The protein operates within isoprenoid biosynthesis; isopentenyl diphosphate biosynthesis via DXP pathway; isopentenyl diphosphate from 1-deoxy-D-xylulose 5-phosphate: step 3/6. Catalyzes the phosphorylation of the position 2 hydroxy group of 4-diphosphocytidyl-2C-methyl-D-erythritol. The sequence is that of 4-diphosphocytidyl-2-C-methyl-D-erythritol kinase from Idiomarina loihiensis (strain ATCC BAA-735 / DSM 15497 / L2-TR).